The sequence spans 380 residues: Cell division protein FtsZ 2 (380 aa).

GTP is bound by residues 47–51, 134–136, Glu165, Arg168, and Asp211; these read GAGNN and GTG.

It belongs to the FtsZ family. In terms of assembly, homodimer. Polymerizes to form a dynamic ring structure in a strictly GTP-dependent manner. Interacts directly with several other division proteins.

Its subcellular location is the cytoplasm. Essential cell division protein that forms a contractile ring structure (Z ring) at the future cell division site. The regulation of the ring assembly controls the timing and the location of cell division. One of the functions of the FtsZ ring is to recruit other cell division proteins to the septum to produce a new cell wall between the dividing cells. Binds GTP and shows GTPase activity. The polypeptide is Cell division protein FtsZ 2 (Methanocaldococcus jannaschii (strain ATCC 43067 / DSM 2661 / JAL-1 / JCM 10045 / NBRC 100440) (Methanococcus jannaschii)).